The chain runs to 141 residues: HTH-type transcriptional repressor NsrR (141 aa).

Residues 2–129 form the HTH rrf2-type domain; it reads QLTNFTDFGL…DKHTIQDMLT (128 aa). A DNA-binding region (H-T-H motif) is located at residues 28–51; it reads ITVVTETFDVSRNHMVKIINKLGQ. Residues Cys-91, Cys-96, and Cys-102 each contribute to the [2Fe-2S] cluster site.

It depends on [2Fe-2S] cluster as a cofactor.

Nitric oxide-sensitive repressor of genes involved in protecting the cell against nitrosative stress. May require iron for activity. The protein is HTH-type transcriptional repressor NsrR of Aliivibrio fischeri (strain ATCC 700601 / ES114) (Vibrio fischeri).